The chain runs to 392 residues: Galactokinase (392 aa).

Alpha-D-galactose contacts are provided by Arg37, Glu43, His44, and Asp46. ATP is bound by residues Gly136, Gly138, Ser140, and Ser141. Asp186 is an alpha-D-galactose binding site. Residue Asp186 is the Proton acceptor of the active site. Ser230 bears the Phosphoserine mark. Tyr236 is an alpha-D-galactose binding site.

The protein belongs to the GHMP kinase family. GalK subfamily. Homodimer.

It catalyses the reaction alpha-D-galactose + ATP = alpha-D-galactose 1-phosphate + ADP + H(+). Its pathway is carbohydrate metabolism; galactose metabolism. Functionally, catalyzes the transfer of a phosphate from ATP to alpha-D-galactose and participates in the first committed step in the catabolism of galactose. This Homo sapiens (Human) protein is Galactokinase.